The following is a 769-amino-acid chain: 5-methyltetrahydropteroyltriglutamate--homocysteine methyltransferase (769 aa).

5-methyltetrahydropteroyltri-L-glutamate contacts are provided by residues 16–19 (RELK) and K118. L-homocysteine contacts are provided by residues 440–442 (IGS) and E493. Residues 440-442 (IGS) and E493 contribute to the L-methionine site. 5-methyltetrahydropteroyltri-L-glutamate is bound by residues 524–525 (RC) and W570. An L-homocysteine-binding site is contributed by D608. D608 contributes to the L-methionine binding site. E614 contacts 5-methyltetrahydropteroyltri-L-glutamate. H650, C652, and E674 together coordinate Zn(2+). The active-site Proton donor is H706. Position 738 (C738) interacts with Zn(2+).

Belongs to the vitamin-B12 independent methionine synthase family. Zn(2+) serves as cofactor.

It carries out the reaction 5-methyltetrahydropteroyltri-L-glutamate + L-homocysteine = tetrahydropteroyltri-L-glutamate + L-methionine. The protein operates within amino-acid biosynthesis; L-methionine biosynthesis via de novo pathway; L-methionine from L-homocysteine (MetE route): step 1/1. Catalyzes the transfer of a methyl group from 5-methyltetrahydrofolate to homocysteine resulting in methionine formation. In Acidiphilium cryptum (strain JF-5), this protein is 5-methyltetrahydropteroyltriglutamate--homocysteine methyltransferase.